Here is a 568-residue protein sequence, read N- to C-terminus: Urease subunit alpha (568 aa).

Positions 134, 136, and 217 each coordinate Ni(2+). K217 carries the N6-carboxylysine modification. H219 serves as a coordination point for substrate. Ni(2+) contacts are provided by H246 and H272. The Proton donor role is filled by H320. A Ni(2+)-binding site is contributed by D360.

Belongs to the metallo-dependent hydrolases superfamily. Urease alpha subunit family. Heterotrimer of UreA (gamma), UreB (beta) and UreC (alpha) subunits. Three heterotrimers associate to form the active enzyme. It depends on Ni cation as a cofactor. In terms of processing, carboxylation allows a single lysine to coordinate two nickel ions.

The protein resides in the cytoplasm. It carries out the reaction urea + 2 H2O + H(+) = hydrogencarbonate + 2 NH4(+). Its pathway is nitrogen metabolism; urea degradation; CO(2) and NH(3) from urea (urease route): step 1/1. This Marinomonas sp. (strain MWYL1) protein is Urease subunit alpha.